Here is a 912-residue protein sequence, read N- to C-terminus: Metabotropic glutamate receptor 4 (912 aa).

The first 32 residues, 1–32, serve as a signal peptide directing secretion; it reads MPGKSGLGWWWARLPLCLLLSLYGPWMPSSLG. The Extracellular portion of the chain corresponds to 33–586; it reads KPKGHPHMNS…PIIKLEWDSP (554 aa). A disulfide bridge links C67 with C109. N98 carries an N-linked (GlcNAc...) asparagine glycan. Residues S159, 180–182, and Y230 contribute to the L-glutamate site; that span reads AST. 7 disulfides stabilise this stretch: C249–C538, C372–C388, C428–C435, C520–C539, C524–C542, C545–C557, and C560–C573. N301 carries an N-linked (GlcNAc...) asparagine glycan. D312 contacts L-glutamate. Residue K405 coordinates L-glutamate. N-linked (GlcNAc...) asparagine glycans are attached at residues N454 and N484. N569 carries an N-linked (GlcNAc...) asparagine glycan. Residues 587-607 traverse the membrane as a helical segment; the sequence is WAVLPLFLAVVGIAATLFVVI. Residues 608 to 624 lie on the Cytoplasmic side of the membrane; it reads TFVRYNDTPIVKASGRE. The chain crosses the membrane as a helical span at residues 625–645; that stretch reads LSYVLLAGIFLCYATTFLMIA. Topologically, residues 646–653 are extracellular; sequence EPDLGTCS. A helical membrane pass occupies residues 654–671; that stretch reads LRRIFLGLGMSISYAALL. The Cytoplasmic portion of the chain corresponds to 672 to 699; sequence TKTNRIYRIFEQGKRSVSAPRFISPASQ. The chain crosses the membrane as a helical span at residues 700 to 720; that stretch reads LAITFSLISLQLLGICVWFVV. The Extracellular portion of the chain corresponds to 721 to 751; the sequence is DPSHSVVDFQDQRTLDPRFARGVLKCDISDL. A helical transmembrane segment spans residues 752–772; it reads SLICLLGYSMLLMVTCTVYAI. Topologically, residues 773–786 are cytoplasmic; the sequence is KTRGVPETFNEAKP. The helical transmembrane segment at 787–807 threads the bilayer; sequence IGFTMYTTCIVWLAFIPIFFG. Residues 808-826 are Extracellular-facing; sequence TSQSADKLYIQTTTLTVSV. A helical membrane pass occupies residues 827–847; the sequence is SLSASVSLGMLYMPKVYIILF. The Cytoplasmic portion of the chain corresponds to 848–912; it reads HPEQNVPKRK…TYVTYTNHAI (65 aa).

This sequence belongs to the G-protein coupled receptor 3 family. In terms of assembly, interacts with PICK1.

It is found in the cell membrane. Its function is as follows. G-protein coupled receptor for glutamate. Ligand binding causes a conformation change that triggers signaling via guanine nucleotide-binding proteins (G proteins) and modulates the activity of down-stream effectors. Signaling inhibits adenylate cyclase activity. The chain is Metabotropic glutamate receptor 4 (GRM4) from Macaca fascicularis (Crab-eating macaque).